A 161-amino-acid polypeptide reads, in one-letter code: Nucleotide-binding protein Geob_0921 (161 aa).

This sequence belongs to the YajQ family.

Nucleotide-binding protein. The protein is Nucleotide-binding protein Geob_0921 of Geotalea daltonii (strain DSM 22248 / JCM 15807 / FRC-32) (Geobacter daltonii).